We begin with the raw amino-acid sequence, 37 residues long: Omega-conotoxin-like S6.7 (37 aa).

The propeptide occupies 1–4 (KSTS). Cystine bridges form between Cys5–Cys20, Cys12–Cys23, and Cys19–Cys32.

The protein belongs to the conotoxin O1 superfamily. In terms of tissue distribution, expressed by the venom duct.

Its subcellular location is the secreted. Its function is as follows. Omega-conotoxins act at presynaptic membranes, they bind and block voltage-gated calcium channels (Cav). This toxin blocks N-, P- and Q-type calcium channels. The polypeptide is Omega-conotoxin-like S6.7 (Conus striatus (Striated cone)).